The sequence spans 122 residues: uncharacterized protein (122 aa).

This is an uncharacterized protein from Homo sapiens (Human).